The following is a 286-amino-acid chain: Shikimate dehydrogenase (NADP(+)) (286 aa).

Shikimate-binding positions include 22–24 (SRS) and T71. Residue K75 is the Proton acceptor of the active site. E87 serves as a coordination point for NADP(+). Residues N96 and D111 each coordinate shikimate. NADP(+) is bound by residues 136–140 (GAGGA), 160–165 (NRTAAR), and I225. Position 227 (Y227) interacts with shikimate. Residue G248 coordinates NADP(+).

The protein belongs to the shikimate dehydrogenase family. As to quaternary structure, homodimer.

The catalysed reaction is shikimate + NADP(+) = 3-dehydroshikimate + NADPH + H(+). Its pathway is metabolic intermediate biosynthesis; chorismate biosynthesis; chorismate from D-erythrose 4-phosphate and phosphoenolpyruvate: step 4/7. Its function is as follows. Involved in the biosynthesis of the chorismate, which leads to the biosynthesis of aromatic amino acids. Catalyzes the reversible NADPH linked reduction of 3-dehydroshikimate (DHSA) to yield shikimate (SA). This chain is Shikimate dehydrogenase (NADP(+)), found in Sinorhizobium fredii (strain NBRC 101917 / NGR234).